The chain runs to 304 residues: Aspartate carbamoyltransferase catalytic subunit (304 aa).

Positions 49 and 50 each coordinate carbamoyl phosphate. Lysine 77 is a binding site for L-aspartate. Arginine 99, histidine 127, and glutamine 130 together coordinate carbamoyl phosphate. Arginine 160 and arginine 211 together coordinate L-aspartate. Residues alanine 252 and proline 253 each coordinate carbamoyl phosphate.

Belongs to the aspartate/ornithine carbamoyltransferase superfamily. ATCase family. As to quaternary structure, heterododecamer (2C3:3R2) of six catalytic PyrB chains organized as two trimers (C3), and six regulatory PyrI chains organized as three dimers (R2).

The enzyme catalyses carbamoyl phosphate + L-aspartate = N-carbamoyl-L-aspartate + phosphate + H(+). Its pathway is pyrimidine metabolism; UMP biosynthesis via de novo pathway; (S)-dihydroorotate from bicarbonate: step 2/3. Functionally, catalyzes the condensation of carbamoyl phosphate and aspartate to form carbamoyl aspartate and inorganic phosphate, the committed step in the de novo pyrimidine nucleotide biosynthesis pathway. The polypeptide is Aspartate carbamoyltransferase catalytic subunit (Bacillus cereus (strain ZK / E33L)).